Consider the following 154-residue polypeptide: Ribosome maturation factor RimP (154 aa).

Belongs to the RimP family.

Its subcellular location is the cytoplasm. Its function is as follows. Required for maturation of 30S ribosomal subunits. This is Ribosome maturation factor RimP from Clostridium novyi (strain NT).